A 322-amino-acid polypeptide reads, in one-letter code: Tyrosine recombinase XerC (322 aa).

The segment at 1 to 25 (MPEAAPPVADARGSSPTATTGPGAD) is disordered. Residues 16-25 (PTATTGPGAD) show a composition bias toward low complexity. A Core-binding (CB) domain is found at 25–111 (DATLSAVEPF…ACRSYYAWLL (87 aa)). The Tyr recombinase domain occupies 132–309 (KLPQVLDADE…DFQHLAKVYD (178 aa)). Active-site residues include R171, K195, H261, R264, and H287. The O-(3'-phospho-DNA)-tyrosine intermediate role is filled by Y296.

This sequence belongs to the 'phage' integrase family. XerC subfamily. Forms a cyclic heterotetrameric complex composed of two molecules of XerC and two molecules of XerD.

The protein resides in the cytoplasm. Functionally, site-specific tyrosine recombinase, which acts by catalyzing the cutting and rejoining of the recombining DNA molecules. The XerC-XerD complex is essential to convert dimers of the bacterial chromosome into monomers to permit their segregation at cell division. It also contributes to the segregational stability of plasmids. In Xanthomonas campestris pv. campestris (strain 8004), this protein is Tyrosine recombinase XerC.